Here is a 243-residue protein sequence, read N- to C-terminus: Hydroxyacylglutathione hydrolase (243 aa).

7 residues coordinate Zn(2+): histidine 52, histidine 54, aspartate 56, histidine 57, histidine 108, aspartate 125, and histidine 163.

The protein belongs to the metallo-beta-lactamase superfamily. Glyoxalase II family. In terms of assembly, monomer. Zn(2+) is required as a cofactor.

The catalysed reaction is an S-(2-hydroxyacyl)glutathione + H2O = a 2-hydroxy carboxylate + glutathione + H(+). The protein operates within secondary metabolite metabolism; methylglyoxal degradation; (R)-lactate from methylglyoxal: step 2/2. Its function is as follows. Thiolesterase that catalyzes the hydrolysis of S-D-lactoyl-glutathione to form glutathione and D-lactic acid. The protein is Hydroxyacylglutathione hydrolase of Haemophilus influenzae (strain PittGG).